The following is a 137-amino-acid chain: Peptide methionine sulfoxide reductase MsrB (137 aa).

Residues 7–129 form the MsrB domain; it reads AEELKKKLSE…NSASLAFSDE (123 aa). Zn(2+) contacts are provided by Cys-46, Cys-49, Cys-95, and Cys-98. Cys-118 serves as the catalytic Nucleophile.

The protein belongs to the MsrB Met sulfoxide reductase family. The cofactor is Zn(2+).

The enzyme catalyses L-methionyl-[protein] + [thioredoxin]-disulfide + H2O = L-methionyl-(R)-S-oxide-[protein] + [thioredoxin]-dithiol. This chain is Peptide methionine sulfoxide reductase MsrB, found in Salmonella arizonae (strain ATCC BAA-731 / CDC346-86 / RSK2980).